Reading from the N-terminus, the 363-residue chain is UDP-N-acetylglucosamine--N-acetylmuramyl-(pentapeptide) pyrophosphoryl-undecaprenol N-acetylglucosamine transferase (363 aa).

Residues 12-14 (TAG), Arg166, Ser196, and Gln291 contribute to the UDP-N-acetyl-alpha-D-glucosamine site.

Belongs to the glycosyltransferase 28 family. MurG subfamily.

Its subcellular location is the cell inner membrane. The catalysed reaction is di-trans,octa-cis-undecaprenyl diphospho-N-acetyl-alpha-D-muramoyl-L-alanyl-D-glutamyl-meso-2,6-diaminopimeloyl-D-alanyl-D-alanine + UDP-N-acetyl-alpha-D-glucosamine = di-trans,octa-cis-undecaprenyl diphospho-[N-acetyl-alpha-D-glucosaminyl-(1-&gt;4)]-N-acetyl-alpha-D-muramoyl-L-alanyl-D-glutamyl-meso-2,6-diaminopimeloyl-D-alanyl-D-alanine + UDP + H(+). It participates in cell wall biogenesis; peptidoglycan biosynthesis. Cell wall formation. Catalyzes the transfer of a GlcNAc subunit on undecaprenyl-pyrophosphoryl-MurNAc-pentapeptide (lipid intermediate I) to form undecaprenyl-pyrophosphoryl-MurNAc-(pentapeptide)GlcNAc (lipid intermediate II). This chain is UDP-N-acetylglucosamine--N-acetylmuramyl-(pentapeptide) pyrophosphoryl-undecaprenol N-acetylglucosamine transferase, found in Legionella pneumophila (strain Paris).